The chain runs to 170 residues: Crossover junction endodeoxyribonuclease RuvC (170 aa).

Residues Asp11, Glu71, and Asp143 contribute to the active site. Mg(2+) contacts are provided by Asp11, Glu71, and Asp143.

It belongs to the RuvC family. In terms of assembly, homodimer which binds Holliday junction (HJ) DNA. The HJ becomes 2-fold symmetrical on binding to RuvC with unstacked arms; it has a different conformation from HJ DNA in complex with RuvA. In the full resolvosome a probable DNA-RuvA(4)-RuvB(12)-RuvC(2) complex forms which resolves the HJ. It depends on Mg(2+) as a cofactor.

Its subcellular location is the cytoplasm. It carries out the reaction Endonucleolytic cleavage at a junction such as a reciprocal single-stranded crossover between two homologous DNA duplexes (Holliday junction).. Its function is as follows. The RuvA-RuvB-RuvC complex processes Holliday junction (HJ) DNA during genetic recombination and DNA repair. Endonuclease that resolves HJ intermediates. Cleaves cruciform DNA by making single-stranded nicks across the HJ at symmetrical positions within the homologous arms, yielding a 5'-phosphate and a 3'-hydroxyl group; requires a central core of homology in the junction. The consensus cleavage sequence is 5'-(A/T)TT(C/G)-3'. Cleavage occurs on the 3'-side of the TT dinucleotide at the point of strand exchange. HJ branch migration catalyzed by RuvA-RuvB allows RuvC to scan DNA until it finds its consensus sequence, where it cleaves and resolves the cruciform DNA. The sequence is that of Crossover junction endodeoxyribonuclease RuvC from Agrobacterium fabrum (strain C58 / ATCC 33970) (Agrobacterium tumefaciens (strain C58)).